The chain runs to 169 residues: S-ribosylhomocysteine lyase (169 aa).

Positions 54, 58, and 128 each coordinate Fe cation.

This sequence belongs to the LuxS family. As to quaternary structure, homodimer. Fe cation is required as a cofactor.

It carries out the reaction S-(5-deoxy-D-ribos-5-yl)-L-homocysteine = (S)-4,5-dihydroxypentane-2,3-dione + L-homocysteine. Its function is as follows. Involved in the synthesis of autoinducer 2 (AI-2) which is secreted by bacteria and is used to communicate both the cell density and the metabolic potential of the environment. The regulation of gene expression in response to changes in cell density is called quorum sensing. Catalyzes the transformation of S-ribosylhomocysteine (RHC) to homocysteine (HC) and 4,5-dihydroxy-2,3-pentadione (DPD). This is S-ribosylhomocysteine lyase from Shewanella sp. (strain MR-4).